Reading from the N-terminus, the 336-residue chain is MKHFSDQTWRSPQQSAVITYSPAYTLVPTYECFNRCTYCNFRRDPGMDEWLSLSTAQQRLLTVRDRGVCEVLILSGEVHPQSPRRAAWRQRLIELAELALDMGFLPHTNAGPLNRAEMIALQNVNVSLGLMLEQLTPQLQRTVHRAAPSKDPQLRLQQLEQAGELGIPFTTGLLLGIGETSRDRLETLEAIAACHDRWGHIQEVILQPHSPGRQQAIQHPPLAPDELIDCVAIARQVLPTSIAIQVPPNLLTQPQQLADCLGAGARDLGGIVPYDEVNPDYQHHDLDELREALAQQGWQLQPRLPVYPHLVDRLPQRLQTHVAAWLNRFNSQSRSS.

In terms of domain architecture, Radical SAM core spans 18 to 249 (ITYSPAYTLV…TSIAIQVPPN (232 aa)). [4Fe-4S] cluster is bound by residues cysteine 32, cysteine 36, and cysteine 39.

Belongs to the radical SAM superfamily. CofG family. Consists of two subunits, CofG and CofH. Requires [4Fe-4S] cluster as cofactor.

It catalyses the reaction 5-amino-5-(4-hydroxybenzyl)-6-(D-ribitylimino)-5,6-dihydrouracil + S-adenosyl-L-methionine = 7,8-didemethyl-8-hydroxy-5-deazariboflavin + 5'-deoxyadenosine + L-methionine + NH4(+) + H(+). The protein operates within cofactor biosynthesis; coenzyme F0 biosynthesis. Its function is as follows. Catalyzes the radical-mediated synthesis of 7,8-didemethyl-8-hydroxy-5-deazariboflavin from 5-amino-5-(4-hydroxybenzyl)-6-(D-ribitylimino)-5,6-dihydrouracil. The protein is 7,8-didemethyl-8-hydroxy-5-deazariboflavin synthase of Synechococcus elongatus (strain ATCC 33912 / PCC 7942 / FACHB-805) (Anacystis nidulans R2).